The following is a 355-amino-acid chain: Erythronate-4-phosphate dehydrogenase (355 aa).

Substrate-binding residues include serine 45 and threonine 66. Position 146 (aspartate 146) interacts with NAD(+). Residue arginine 206 is part of the active site. Residue aspartate 229 participates in NAD(+) binding. The active site involves glutamate 234. Histidine 251 acts as the Proton donor in catalysis. NAD(+) is bound at residue glycine 254. Tyrosine 255 is a binding site for substrate.

This sequence belongs to the D-isomer specific 2-hydroxyacid dehydrogenase family. PdxB subfamily. In terms of assembly, homodimer.

The protein resides in the cytoplasm. It catalyses the reaction 4-phospho-D-erythronate + NAD(+) = (R)-3-hydroxy-2-oxo-4-phosphooxybutanoate + NADH + H(+). It functions in the pathway cofactor biosynthesis; pyridoxine 5'-phosphate biosynthesis; pyridoxine 5'-phosphate from D-erythrose 4-phosphate: step 2/5. Catalyzes the oxidation of erythronate-4-phosphate to 3-hydroxy-2-oxo-4-phosphonooxybutanoate. This Acinetobacter baylyi (strain ATCC 33305 / BD413 / ADP1) protein is Erythronate-4-phosphate dehydrogenase.